A 248-amino-acid polypeptide reads, in one-letter code: Clathrin light chain A (248 aa).

A disordered region spans residues 1-93; sequence MAELDPFGAP…YQESNGPTDS (93 aa). The span at 13 to 25 shows a compositional bias: gly residues; the sequence is APGGPALGNGVAG. The segment at 100–162 is involved in binding clathrin heavy chain; sequence VDRLQSEPES…QLQKTKASNR (63 aa). 2 positions are modified to phosphoserine: serine 105 and serine 206. The residue at position 223 (lysine 223) is an N6-acetyllysine. Serine 236 carries the phosphoserine modification. N6-acetyllysine is present on lysine 242.

This sequence belongs to the clathrin light chain family. In terms of assembly, clathrin coats are formed from molecules containing 3 heavy chains and 3 light chains. Interacts with CALY; the interaction stimulates clathrin self-assembly and clathrin-mediated endocytosis. Interacts with CKAP5 and TACC3 forming the TACC3/ch-TOG/clathrin complex located at spindle inter-microtubules bridges; the complex implicates clathrin triskelions.

The protein resides in the cytoplasmic vesicle membrane. It localises to the membrane. It is found in the coated pit. The protein localises to the cytoplasm. Its subcellular location is the cytoskeleton. The protein resides in the spindle. In terms of biological role, clathrin is the major protein of the polyhedral coat of coated pits and vesicles. Acts as a component of the TACC3/ch-TOG/clathrin complex proposed to contribute to stabilization of kinetochore fibers of the mitotic spindle by acting as inter-microtubule bridge. This chain is Clathrin light chain A (Clta), found in Rattus norvegicus (Rat).